A 312-amino-acid chain; its full sequence is Glyoxylate/hydroxypyruvate reductase A (312 aa).

The active site involves Arg-227. Catalysis depends on His-275, which acts as the Proton donor.

It belongs to the D-isomer specific 2-hydroxyacid dehydrogenase family. GhrA subfamily.

Its subcellular location is the cytoplasm. The catalysed reaction is glycolate + NADP(+) = glyoxylate + NADPH + H(+). It carries out the reaction (R)-glycerate + NAD(+) = 3-hydroxypyruvate + NADH + H(+). It catalyses the reaction (R)-glycerate + NADP(+) = 3-hydroxypyruvate + NADPH + H(+). Its function is as follows. Catalyzes the NADPH-dependent reduction of glyoxylate and hydroxypyruvate into glycolate and glycerate, respectively. The sequence is that of Glyoxylate/hydroxypyruvate reductase A from Escherichia coli (strain ATCC 8739 / DSM 1576 / NBRC 3972 / NCIMB 8545 / WDCM 00012 / Crooks).